The sequence spans 285 residues: Bifunctional protein FolD (285 aa).

Residues 165–167 (GRS) and S190 contribute to the NADP(+) site.

This sequence belongs to the tetrahydrofolate dehydrogenase/cyclohydrolase family. In terms of assembly, homodimer.

It catalyses the reaction (6R)-5,10-methylene-5,6,7,8-tetrahydrofolate + NADP(+) = (6R)-5,10-methenyltetrahydrofolate + NADPH. It carries out the reaction (6R)-5,10-methenyltetrahydrofolate + H2O = (6R)-10-formyltetrahydrofolate + H(+). It functions in the pathway one-carbon metabolism; tetrahydrofolate interconversion. In terms of biological role, catalyzes the oxidation of 5,10-methylenetetrahydrofolate to 5,10-methenyltetrahydrofolate and then the hydrolysis of 5,10-methenyltetrahydrofolate to 10-formyltetrahydrofolate. The chain is Bifunctional protein FolD from Burkholderia pseudomallei (strain 1710b).